A 294-amino-acid chain; its full sequence is UPF0761 membrane protein YPTB0027 (294 aa).

Helical transmembrane passes span Leu-44–Phe-64, Ile-67–Ile-87, Gly-108–Trp-128, Leu-136–Ala-156, Val-185–Val-205, Ala-212–Met-232, and Val-246–Leu-266.

This sequence belongs to the UPF0761 family.

The protein localises to the cell inner membrane. The chain is UPF0761 membrane protein YPTB0027 from Yersinia pseudotuberculosis serotype I (strain IP32953).